The primary structure comprises 452 residues: tRNA modification GTPase MnmE (452 aa).

(6S)-5-formyl-5,6,7,8-tetrahydrofolate-binding residues include Arg-21, Glu-78, and Lys-118. In terms of domain architecture, TrmE-type G spans 214–375; sequence GMKVVIAGRP…LREHLKQSMG (162 aa). Asn-224 contacts K(+). GTP contacts are provided by residues 224-229, 243-249, 268-271, and 333-336; these read NAGKSS, TDIAGTT, DTAG, and NKAD. Ser-228 serves as a coordination point for Mg(2+). K(+)-binding residues include Thr-243, Ile-245, and Thr-248. Thr-249 contacts Mg(2+). Position 452 (Lys-452) interacts with (6S)-5-formyl-5,6,7,8-tetrahydrofolate.

This sequence belongs to the TRAFAC class TrmE-Era-EngA-EngB-Septin-like GTPase superfamily. TrmE GTPase family. In terms of assembly, homodimer. Heterotetramer of two MnmE and two MnmG subunits. Requires K(+) as cofactor.

The protein localises to the cytoplasm. Exhibits a very high intrinsic GTPase hydrolysis rate. Involved in the addition of a carboxymethylaminomethyl (cmnm) group at the wobble position (U34) of certain tRNAs, forming tRNA-cmnm(5)s(2)U34. This chain is tRNA modification GTPase MnmE, found in Pasteurella multocida (strain Pm70).